The sequence spans 366 residues: MGILEKIAEIEHEISRTQKNKATEYHLGLLKAKLAKYRQQLLEPTGKGGAKGEGFDVMKSGDARVAMVGFPSVGKSTLLSSMTSTHSEAAGYEFTTLTCIPGVISYNGANIQLLDLPGIIEGASQGKGRGRQVISVAKTADLILMMLDAGKSDQQKMLLERELEAVGIRLNKKPPNIYVKQKKVGGVKFTNTVPLTHCNEKLIMTVLHEYKIFNADVIFREDCTVDEFIDVIQGNRVYMTCLYVYNKVDQISIEEIDRLARMPHHVVISCEMNLNMDYLLEKMWEYLALVRVYTKKPGNAPDLGPEDGIILRGGATIEHCCHALHRSIAAQLRYAIVWGTSTKFSPQRVGLHHKLDHEDVIQIVKK.

Residues 63-288 enclose the OBG-type G domain; it reads ARVAMVGFPS…LLEKMWEYLA (226 aa). Residues 69 to 76, 115 to 119, and 246 to 249 contribute to the GTP site; these read GFPSVGKS, DLPGI, and NKVD. The region spanning 288-365 is the TGS domain; it reads ALVRVYTKKP…DHEDVIQIVK (78 aa).

The protein belongs to the TRAFAC class OBG-HflX-like GTPase superfamily. OBG GTPase family.

This is an uncharacterized protein from Caenorhabditis elegans.